We begin with the raw amino-acid sequence, 300 residues long: ETS homologous factor (300 aa).

The 87-residue stretch at 29–115 (STCNVSSGFF…SNLQHLKWNG (87 aa)) folds into the PNT domain. Residues 183–202 (ESPDMKKEQDPPAKCHTKKH) are disordered. Positions 185 to 195 (PDMKKEQDPPA) are enriched in basic and acidic residues. A DNA-binding region (ETS) is located at residues 207–289 (THLWEFIRDI…DGRRLVYKFG (83 aa)).

It belongs to the ETS family.

Its subcellular location is the nucleus. Functionally, transcriptional activator that may play a role in regulating epithelial cell differentiation and proliferation. May act as a repressor for a specific subset of ETS/AP-1-responsive genes, and as a modulator of the nuclear response to mitogen-activated protein kinase signaling cascades. Binds to DNA sequences containing the consensus nucleotide core sequence GGAA. Involved in regulation of TNFRSF10B/DR5 expression through Ets-binding sequences on the TNFRSF10B/DR5 promoter. The polypeptide is ETS homologous factor (EHF) (Pan paniscus (Pygmy chimpanzee)).